Reading from the N-terminus, the 450-residue chain is MPDTIVAISTPIGTGAISVIRMSGSKSWQICQNVLLRKTKIEPRKAFHNYVKDSDGTILDEVMVIFYKSPNSYTGEDMIEIMCHGGIAVTQSILDTLISHGARPAEPGEFTRRAFLNGKIDLTKAEAVKQIIEASSRKTVKLVAANLAGRLSEIVHKLRETLLGTLAKIEVEFDYPDEILTDPYLIEKELNDAILQIEEILKNAQNRLILSSGIKVVIIGKPNVGKSTLLNTLVKEERAIVTDIPGTTRDLIEVPLMINGISFTLIDTAGIRHSHDEVEKIGVERAIKAADEGNLILFVLDATTPVDENDKKILSLIKEKKYIVVINKIDATDLIDREELKKILGTNTHVLTISALKKEGIQRLEEEIIKSVKDLIQQTDGYITTQRQYEYLASCRKELSDSIEAFKKKLPLDIVAQKVKEALGSIDKLLGTDYTDDLLDRIFKDFCVGK.

Arginine 21, glutamate 80, and lysine 119 together coordinate (6S)-5-formyl-5,6,7,8-tetrahydrofolate. Residues 213–373 (GIKVVIIGKP…LEEEIIKSVK (161 aa)) form the TrmE-type G domain. Asparagine 223 provides a ligand contact to K(+). GTP-binding positions include 223–228 (NVGKST), 242–248 (TDIPGTT), and 267–270 (DTAG). Position 227 (serine 227) interacts with Mg(2+). K(+)-binding residues include threonine 242, isoleucine 244, and threonine 247. Threonine 248 contacts Mg(2+). (6S)-5-formyl-5,6,7,8-tetrahydrofolate is bound at residue lysine 450.

This sequence belongs to the TRAFAC class TrmE-Era-EngA-EngB-Septin-like GTPase superfamily. TrmE GTPase family. In terms of assembly, homodimer. Heterotetramer of two MnmE and two MnmG subunits. Requires K(+) as cofactor.

It is found in the cytoplasm. Exhibits a very high intrinsic GTPase hydrolysis rate. Involved in the addition of a carboxymethylaminomethyl (cmnm) group at the wobble position (U34) of certain tRNAs, forming tRNA-cmnm(5)s(2)U34. This Pseudothermotoga lettingae (strain ATCC BAA-301 / DSM 14385 / NBRC 107922 / TMO) (Thermotoga lettingae) protein is tRNA modification GTPase MnmE.